The following is a 236-amino-acid chain: Small ribosomal subunit protein uS2c (236 aa).

This sequence belongs to the universal ribosomal protein uS2 family.

It localises to the plastid. It is found in the chloroplast. The protein is Small ribosomal subunit protein uS2c (rps2) of Olimarabidopsis pumila (Dwarf rocket).